The following is a 534-amino-acid chain: Zinc finger protein 671 (534 aa).

A KRAB domain is found at 49-120 (VVFEDVFVYF…DQVDMTSATE (72 aa)). The segment at 192–214 (YLCGACGKQFWFSTDFDQHQNQP) adopts a C2H2-type 1; degenerate zinc-finger fold. 9 consecutive C2H2-type zinc fingers follow at residues 285 to 307 (HRCG…QRIH), 313 to 335 (YECN…QTVH), 341 to 363 (YECS…RRVH), 369 to 391 (YQCG…QEVH), 397 to 419 (YVCS…QRTH), 425 to 447 (YECS…WRIH), 451 to 473 (YECS…QKVH), 479 to 501 (YECS…WKVH), and 507 to 529 (YVCS…QRVH).

This sequence belongs to the krueppel C2H2-type zinc-finger protein family.

The protein localises to the nucleus. In terms of biological role, may be involved in transcriptional regulation. The protein is Zinc finger protein 671 (ZNF671) of Homo sapiens (Human).